We begin with the raw amino-acid sequence, 69 residues long: UPF0346 protein YuiB (69 aa).

Belongs to the UPF0346 family.

The chain is UPF0346 protein YuiB (yuiB) from Lactococcus lactis subsp. lactis (strain IL1403) (Streptococcus lactis).